The following is a 623-amino-acid chain: Replication protein A 70 kDa DNA-binding subunit (623 aa).

Residue Met-1 is modified to N-acetylmethionine. Glycyl lysine isopeptide (Lys-Gly) (interchain with G-Cter in ubiquitin) cross-links involve residues Lys-22 and Lys-88. The segment at 116-163 (VPYNEGYGQQQQQQQQQQQQAVPSPASAATPPASKPQPQNGSLGMGST) is disordered. Positions 124-154 (QQQQQQQQQQQQAVPSPASAATPPASKPQPQ) are enriched in low complexity. N6-acetyllysine; alternate is present on residues Lys-172 and Lys-176. Glycyl lysine isopeptide (Lys-Gly) (interchain with G-Cter in ubiquitin); alternate cross-links involve residues Lys-172 and Lys-176. Position 189 is a phosphothreonine (Thr-189). A Glycyl lysine isopeptide (Lys-Gly) (interchain with G-Cter in ubiquitin) cross-link involves residue Lys-192. Phosphothreonine is present on Thr-200. Residues 206–290 (WTICARVTNK…VKNDYEMTFN (85 aa)) constitute a DNA-binding region (OB). Glycyl lysine isopeptide (Lys-Gly) (interchain with G-Cter in ubiquitin) cross-links involve residues Lys-229 and Lys-253. Lys-268 is modified (N6-acetyllysine; alternate). A Glycyl lysine isopeptide (Lys-Gly) (interchain with G-Cter in ubiquitin); alternate cross-link involves residue Lys-268. Residues Lys-276 and Lys-340 each participate in a glycyl lysine isopeptide (Lys-Gly) (interchain with G-Cter in ubiquitin) cross-link. Ser-393 carries the phosphoserine modification. Lys-419 participates in a covalent cross-link: Glycyl lysine isopeptide (Lys-Gly) (interchain with G-Cter in ubiquitin). Residue Lys-458 forms a Glycyl lysine isopeptide (Lys-Gly) (interchain with G-Cter in SUMO) linkage. A Glycyl lysine isopeptide (Lys-Gly) (interchain with G-Cter in ubiquitin) cross-link involves residue Lys-467. Residues 490 to 512 (CPTQDCNKKVIDQQNGLYRCEKC) form a C4-type zinc finger. Lys-562 participates in a covalent cross-link: Glycyl lysine isopeptide (Lys-Gly) (interchain with G-Cter in ubiquitin). Residue Lys-586 forms a Glycyl lysine isopeptide (Lys-Gly) (interchain with G-Cter in SUMO) linkage.

Belongs to the replication factor A protein 1 family. Component of the canonical replication protein A complex (RPA), a heterotrimer composed of RPA1, RPA2 and RPA3. The DNA-binding activity may reside exclusively on the RPA1 subunit. Interacts with PRPF19; the PRP19-CDC5L complex is recruited to the sites of DNA repair where it ubiquitinates the replication protein A complex (RPA). Interacts with RIPK1. Interacts with the polymerase alpha subunit POLA1/p180; this interaction stabilizes the replicative complex and reduces the misincorporation rate of DNA polymerase alpha by acting as a fidelity clamp. Interacts with RAD51 and SENP6 to regulate DNA repair. Interacts with HELB; this interaction promotes HELB recruitment to chromatin following DNA damage. Interacts with PRIMPOL; leading to recruit PRIMPOL on chromatin and stimulate its DNA primase activity. Interacts with XPA; the interaction is direct and associates XPA with the RPA complex. Interacts with ETAA1; the interaction is direct and promotes ETAA1 recruitment at stalled replication forks. Interacts with RPA1; this interaction associates HROB with the RPA complex. Interacts (when poly-ADP-ribosylated) with HTATSF1. Post-translationally, DNA damage-induced 'Lys-63'-linked polyubiquitination by PRPF19 mediates ATRIP recruitment to the RPA complex at sites of DNA damage and activation of ATR. Ubiquitinated by RFWD3 at stalled replication forks in response to DNA damage: ubiquitination by RFWD3 does not lead to degradation by the proteasome and promotes removal of the RPA complex from stalled replication forks, promoting homologous recombination. In terms of processing, sumoylated on lysine residues Lys-458 and Lys-586, with Lys-458 being the major site. Sumoylation promotes recruitment of RAD51 to the DNA damage foci to initiate DNA repair through homologous recombination. Desumoylated by SENP6. Poly-ADP-ribosylated by PARP1; promoting recruitment of HTATSF1.

It localises to the nucleus. The protein resides in the PML body. Its function is as follows. As part of the heterotrimeric replication protein A complex (RPA/RP-A), binds and stabilizes single-stranded DNA intermediates, that form during DNA replication or upon DNA stress. It prevents their reannealing and in parallel, recruits and activates different proteins and complexes involved in DNA metabolism. Thereby, it plays an essential role both in DNA replication and the cellular response to DNA damage. In the cellular response to DNA damage, the RPA complex controls DNA repair and DNA damage checkpoint activation. Through recruitment of ATRIP activates the ATR kinase a master regulator of the DNA damage response. It is required for the recruitment of the DNA double-strand break repair factors RAD51 and RAD52 to chromatin in response to DNA damage. Also recruits to sites of DNA damage proteins like XPA and XPG that are involved in nucleotide excision repair and is required for this mechanism of DNA repair. Also plays a role in base excision repair (BER) probably through interaction with UNG. Also recruits SMARCAL1/HARP, which is involved in replication fork restart, to sites of DNA damage. May also play a role in telomere maintenance. This chain is Replication protein A 70 kDa DNA-binding subunit (Rpa1), found in Mus musculus (Mouse).